The sequence spans 367 residues: Nociceptin receptor (367 aa).

Topologically, residues Met1–Leu45 are extracellular. 3 N-linked (GlcNAc...) asparagine glycosylation sites follow: Asn21, Asn26, and Asn36. Residues Gly46 to Tyr71 traverse the membrane as a helical segment. The Cytoplasmic portion of the chain corresponds to Val72–Asn84. Residues Ile85–Thr106 form a helical membrane-spanning segment. The Extracellular portion of the chain corresponds to Asp107–Lys121. Cys120 and Cys197 form a disulfide bridge. Residues Thr122 to Val143 traverse the membrane as a helical segment. Topologically, residues Asp144–Ser162 are cytoplasmic. The helical transmembrane segment at Lys163 to Met185 threads the bilayer. Topologically, residues Gly186–Trp208 are extracellular. The helical transmembrane segment at Gly209 to Ser233 threads the bilayer. Topologically, residues Leu234–Leu261 are cytoplasmic. The chain crosses the membrane as a helical span at residues Val262–Val282. Topologically, residues Gln283–Ile297 are extracellular. Residues Leu298 to Leu319 form a helical membrane-spanning segment. Topologically, residues Asp320 to Ala367 are cytoplasmic. A lipid anchor (S-palmitoyl cysteine) is attached at Cys331.

It belongs to the G-protein coupled receptor 1 family. Phosphorylation at Ser-360 requires GRK3. Highly expressed in several brain areas, the intestine, liver and spleen. Detected in sympathetic stellate ganglion neurons.

Its subcellular location is the cell membrane. It localises to the cytoplasmic vesicle. Its function is as follows. G-protein coupled opioid receptor that functions as a receptor for the endogenous neuropeptide nociceptin. Ligand binding causes a conformation change that triggers signaling via guanine nucleotide-binding proteins (G proteins) and modulates the activity of down-stream effectors. Signaling via G proteins mediates inhibition of adenylate cyclase activity and calcium channel activity. Arrestins modulate signaling via G proteins and mediate the activation of alternative signaling pathways that lead to the activation of MAP kinases. Plays a role in modulating nociception and the perception of pain. Plays a role in the regulation of locomotor activity by the neuropeptide nociceptin. The polypeptide is Nociceptin receptor (Oprl1) (Rattus norvegicus (Rat)).